Here is a 295-residue protein sequence, read N- to C-terminus: Phosphonoacetaldehyde hydrolase (295 aa).

Asp-36 acts as the Nucleophile in catalysis. 2 residues coordinate Mg(2+): Asp-36 and Ala-38. The active-site Schiff-base intermediate with substrate is the Lys-78. Asp-212 contributes to the Mg(2+) binding site.

Belongs to the HAD-like hydrolase superfamily. PhnX family. As to quaternary structure, homodimer. The cofactor is Mg(2+).

The enzyme catalyses phosphonoacetaldehyde + H2O = acetaldehyde + phosphate + H(+). In terms of biological role, involved in phosphonate degradation. This chain is Phosphonoacetaldehyde hydrolase, found in Psychromonas ingrahamii (strain DSM 17664 / CCUG 51855 / 37).